The sequence spans 552 residues: Dihydroxy-acid dehydratase (552 aa).

Aspartate 78 contacts Mg(2+). Cysteine 119 contacts [2Fe-2S] cluster. Positions 120 and 121 each coordinate Mg(2+). Position 121 is an N6-carboxylysine (lysine 121). [2Fe-2S] cluster is bound at residue cysteine 191. Glutamate 442 contacts Mg(2+). The Proton acceptor role is filled by serine 468.

Belongs to the IlvD/Edd family. As to quaternary structure, homodimer. Requires [2Fe-2S] cluster as cofactor. Mg(2+) serves as cofactor.

It catalyses the reaction (2R)-2,3-dihydroxy-3-methylbutanoate = 3-methyl-2-oxobutanoate + H2O. The enzyme catalyses (2R,3R)-2,3-dihydroxy-3-methylpentanoate = (S)-3-methyl-2-oxopentanoate + H2O. The protein operates within amino-acid biosynthesis; L-isoleucine biosynthesis; L-isoleucine from 2-oxobutanoate: step 3/4. It participates in amino-acid biosynthesis; L-valine biosynthesis; L-valine from pyruvate: step 3/4. Its function is as follows. Functions in the biosynthesis of branched-chain amino acids. Catalyzes the dehydration of (2R,3R)-2,3-dihydroxy-3-methylpentanoate (2,3-dihydroxy-3-methylvalerate) into 2-oxo-3-methylpentanoate (2-oxo-3-methylvalerate) and of (2R)-2,3-dihydroxy-3-methylbutanoate (2,3-dihydroxyisovalerate) into 2-oxo-3-methylbutanoate (2-oxoisovalerate), the penultimate precursor to L-isoleucine and L-valine, respectively. The sequence is that of Dihydroxy-acid dehydratase from Clostridium botulinum (strain Eklund 17B / Type B).